We begin with the raw amino-acid sequence, 50 residues long: MYKLWLLFDPRRALVALSAFLFVLALIIHFIALSTDRFNWLEGKPAVKAA.

The Cytoplasmic segment spans residues 1 to 12 (MYKLWLLFDPRR). Residues 13–33 (ALVALSAFLFVLALIIHFIAL) traverse the membrane as a helical segment. H29 is an a bacteriochlorophyll binding site. Topologically, residues 34–50 (STDRFNWLEGKPAVKAA) are periplasmic.

It belongs to the antenna complex alpha subunit family. The core complex is formed by different alpha and beta chains, binding bacteriochlorophyll molecules, and arranged most probably in tetrameric structures disposed around the reaction center. The non-pigmented gamma chains may constitute additional components.

It is found in the cell inner membrane. Antenna complexes are light-harvesting systems, which transfer the excitation energy to the reaction centers. The sequence is that of Light-harvesting protein B-880 alpha chain from Rhodoblastus acidophilus (Rhodopseudomonas acidophila).